The chain runs to 288 residues: Centromere protein P (288 aa).

The stretch at 1–71 (MDAELAEVRA…HLESELSFLS (71 aa)) forms a coiled coil. A Phosphoserine modification is found at serine 38.

The protein belongs to the CENP-P/CTF19 family. In terms of assembly, component of the CENPA-CAD complex, composed of CENPI, CENPK, CENPL, CENPO, CENPP, CENPQ, CENPR and CENPS. The CENPA-CAD complex interacts with the CENPA-NAC complex, at least composed of CENPA, CENPC, CENPH, CENPM, CENPN, CENPT and CENPU.

The protein localises to the nucleus. It localises to the chromosome. The protein resides in the centromere. Functionally, component of the CENPA-CAD (nucleosome distal) complex, a complex recruited to centromeres which is involved in assembly of kinetochore proteins, mitotic progression and chromosome segregation. May be involved in incorporation of newly synthesized CENPA into centromeres via its interaction with the CENPA-NAC complex. The protein is Centromere protein P (CENPP) of Homo sapiens (Human).